Here is a 189-residue protein sequence, read N- to C-terminus: Casparian strip membrane protein 1 (189 aa).

The Cytoplasmic segment spans residues M1–S42. Residues I43–M63 traverse the membrane as a helical segment. The Extracellular portion of the chain corresponds to G64–T90. Residues F91–I111 form a helical membrane-spanning segment. At V112–D130 the chain is on the cytoplasmic side. A helical transmembrane segment spans residues T131 to A151. The Extracellular segment spans residues H152–S189.

This sequence belongs to the Casparian strip membrane proteins (CASP) family. In terms of assembly, homodimer and heterodimers.

The protein localises to the cell membrane. Regulates membrane-cell wall junctions and localized cell wall deposition. Required for establishment of the Casparian strip membrane domain (CSD) and the subsequent formation of Casparian strips, a cell wall modification of the root endodermis that determines an apoplastic barrier between the intraorganismal apoplasm and the extraorganismal apoplasm and prevents lateral diffusion. This chain is Casparian strip membrane protein 1, found in Striga asiatica (Asiatic witchweed).